Here is a 175-residue protein sequence, read N- to C-terminus: Regenerating islet-derived protein 3-alpha (175 aa).

Residues 1 to 26 form the signal peptide; it reads MLPPMALPSVSWMLLSCLMLLSQVQG. Positions 27–37 are excised as a propeptide; it reads EEPQRELPSAR. 3 cysteine pairs are disulfide-bonded: Cys-40/Cys-51, Cys-68/Cys-171, and Cys-146/Cys-163. The 126-residue stretch at 47 to 172 folds into the C-type lectin domain; sequence YGSHCYALFL…CNVRLPYVCK (126 aa). Residues His-50 and His-107 each coordinate Zn(2+). The interval 103–118 is sufficient to activate EXTL3; sequence WIGLHDPTQGTEPNGE. The short motif at 114–116 is the EPN element; it reads EPN. Zn(2+) contacts are provided by Glu-121 and His-145.

As to quaternary structure, forms a hexameric membrane-permeabilizing oligomeric pore on membrane phospholipids. The hexamer is formed by three dimers related by helical symmetry. Forms filaments, filamentation traps pore complexes and limits damage to host cells. Interacts with EXTL3. In terms of processing, proteolytic processing by trypsin removes an inhibitory N-terminal propeptide and is essential for peptidoglycan binding and antibacterial activity. As to expression, expressed by keratinocytes. Highly expressed in epidermal keratinocytes of psoriasis patients (at protein level). Constitutively expressed in intestine. Low expression is found in healthy pancreas. Overexpressed during the acute phase of pancreatitis and in some patients with chronic pancreatitis.

It localises to the secreted. Its activity is regulated as follows. Lipopolysaccharide inhibits pore-forming activity, explaining why is bactericidal for Gram-positive but not Gram-negative bacteria. Its function is as follows. Bactericidal C-type lectin which acts exclusively against Gram-positive bacteria and mediates bacterial killing by binding to surface-exposed carbohydrate moieties of peptidoglycan. Binds membrane phospholipids and kills bacteria by forming a hexameric membrane-permeabilizing oligomeric pore. Functionally, acts as a hormone in response to different stimuli like anti-inflammatory signals, such as IL17A, or gut microbiome. Secreted by different cell types to activate its receptor EXTL3 and induce cell specific signaling pathways. Induced by IL17A in keratinocytes, regulates keratinocyte proliferation and differentiation after skin injury via activation of EXTL3-PI3K-AKT signaling pathway. In parallel, inhibits skin inflammation through the inhibition of inflammatory cytokines such as IL6 and TNF. In pancreas, is able to permealize beta-cells membrane and stimulate their proliferation. Has bacteriostatic activity. The polypeptide is Regenerating islet-derived protein 3-alpha (Homo sapiens (Human)).